A 66-amino-acid chain; its full sequence is Large ribosomal subunit protein bL33 (66 aa).

This sequence belongs to the bacterial ribosomal protein bL33 family.

The sequence is that of Large ribosomal subunit protein bL33 from Wolbachia pipientis subsp. Culex pipiens (strain wPip).